Reading from the N-terminus, the 451-residue chain is Phosphoglucosamine mutase (451 aa).

S101 serves as the catalytic Phosphoserine intermediate. S101, D242, D244, and D246 together coordinate Mg(2+). S101 bears the Phosphoserine mark.

This sequence belongs to the phosphohexose mutase family. Mg(2+) serves as cofactor. Activated by phosphorylation.

The enzyme catalyses alpha-D-glucosamine 1-phosphate = D-glucosamine 6-phosphate. Functionally, catalyzes the conversion of glucosamine-6-phosphate to glucosamine-1-phosphate. In Beijerinckia indica subsp. indica (strain ATCC 9039 / DSM 1715 / NCIMB 8712), this protein is Phosphoglucosamine mutase.